The sequence spans 591 residues: L-fucose isomerase (591 aa).

Active-site proton acceptor residues include glutamate 337 and aspartate 361. 3 residues coordinate Mn(2+): glutamate 337, aspartate 361, and histidine 528.

This sequence belongs to the L-fucose isomerase family. As to quaternary structure, homohexamer. The cofactor is Mn(2+).

The protein resides in the cytoplasm. It carries out the reaction L-fucose = L-fuculose. It participates in carbohydrate degradation; L-fucose degradation; L-lactaldehyde and glycerone phosphate from L-fucose: step 1/3. Converts the aldose L-fucose into the corresponding ketose L-fuculose. This chain is L-fucose isomerase, found in Escherichia coli O6:K15:H31 (strain 536 / UPEC).